Reading from the N-terminus, the 296-residue chain is Phosphoribosylaminoimidazole-succinocarboxamide synthase (296 aa).

It belongs to the SAICAR synthetase family.

It catalyses the reaction 5-amino-1-(5-phospho-D-ribosyl)imidazole-4-carboxylate + L-aspartate + ATP = (2S)-2-[5-amino-1-(5-phospho-beta-D-ribosyl)imidazole-4-carboxamido]succinate + ADP + phosphate + 2 H(+). It functions in the pathway purine metabolism; IMP biosynthesis via de novo pathway; 5-amino-1-(5-phospho-D-ribosyl)imidazole-4-carboxamide from 5-amino-1-(5-phospho-D-ribosyl)imidazole-4-carboxylate: step 1/2. The protein is Phosphoribosylaminoimidazole-succinocarboxamide synthase of Syntrophotalea carbinolica (strain DSM 2380 / NBRC 103641 / GraBd1) (Pelobacter carbinolicus).